The following is a 526-amino-acid chain: Lysine--tRNA ligase (526 aa).

The 'HIGH' region motif lies at 30 to 38; it reads PSGYVHIGN. Residues Asp95, Cys99, His100, His106, Cys177, and Cys199 each coordinate Zn(2+). The 'KMSKS' region signature appears at 280–284; the sequence is KMSGS.

The protein belongs to the class-I aminoacyl-tRNA synthetase family. Zn(2+) is required as a cofactor.

Its subcellular location is the cytoplasm. The catalysed reaction is tRNA(Lys) + L-lysine + ATP = L-lysyl-tRNA(Lys) + AMP + diphosphate. This is Lysine--tRNA ligase (lysS) from Thermococcus kodakarensis (strain ATCC BAA-918 / JCM 12380 / KOD1) (Pyrococcus kodakaraensis (strain KOD1)).